The following is a 415-amino-acid chain: Histidine--tRNA ligase (415 aa).

The protein belongs to the class-II aminoacyl-tRNA synthetase family. Homodimer.

It localises to the cytoplasm. The enzyme catalyses tRNA(His) + L-histidine + ATP = L-histidyl-tRNA(His) + AMP + diphosphate + H(+). The chain is Histidine--tRNA ligase from Clostridium botulinum (strain Langeland / NCTC 10281 / Type F).